The primary structure comprises 261 residues: Cytochrome c oxidase subunit 3 (261 aa).

The Mitochondrial matrix segment spans residues 1 to 15; that stretch reads MTHQLHQYHLVDPSP. A helical transmembrane segment spans residues 16 to 34; sequence WPLTGAMGSLLLASGLAVW. Over 35 to 40 the chain is Mitochondrial intermembrane; the sequence is FHTNNT. The helical transmembrane segment at 41–66 threads the bilayer; it reads MLLKFGLLTLLLTMFQWWRDIIREST. Residues 67–72 are Mitochondrial matrix-facing; sequence YQGHHT. The chain crosses the membrane as a helical span at residues 73-105; sequence SGVQKNMRYGMILFITSEVFFFLGFFWALYHVS. Residues 106–128 are Mitochondrial intermembrane-facing; the sequence is LVPTPELGAEWPPIGITPLNPME. The helical transmembrane segment at 129 to 152 threads the bilayer; sequence VPLLNTAVLLSSGATITWSHHTMM. At 153-155 the chain is on the mitochondrial matrix side; it reads KGN. A helical transmembrane segment spans residues 156–183; the sequence is KKEATHALMLTIILGAYFTALQLSEYME. Over 184 to 190 the chain is Mitochondrial intermembrane; it reads TPFTIAD. A helical transmembrane segment spans residues 191-223; sequence SVYGSLFFVATGFHGLHVMIGTSFLMVCALRLA. Residues 224 to 232 are Mitochondrial matrix-facing; the sequence is KHHFTITHH. The helical transmembrane segment at 233 to 256 threads the bilayer; it reads FGYEAAIWYWHFVDIVWLFLYISV. The Mitochondrial intermembrane portion of the chain corresponds to 257 to 261; the sequence is YWWGS.

Belongs to the cytochrome c oxidase subunit 3 family. As to quaternary structure, component of the cytochrome c oxidase (complex IV, CIV), a multisubunit enzyme composed of 14 subunits. The complex is composed of a catalytic core of 3 subunits MT-CO1, MT-CO2 and MT-CO3, encoded in the mitochondrial DNA, and 11 supernumerary subunits COX4I, COX5A, COX5B, COX6A, COX6B, COX6C, COX7A, COX7B, COX7C, COX8 and NDUFA4, which are encoded in the nuclear genome. The complex exists as a monomer or a dimer and forms supercomplexes (SCs) in the inner mitochondrial membrane with NADH-ubiquinone oxidoreductase (complex I, CI) and ubiquinol-cytochrome c oxidoreductase (cytochrome b-c1 complex, complex III, CIII), resulting in different assemblies (supercomplex SCI(1)III(2)IV(1) and megacomplex MCI(2)III(2)IV(2)).

The protein resides in the mitochondrion inner membrane. The catalysed reaction is 4 Fe(II)-[cytochrome c] + O2 + 8 H(+)(in) = 4 Fe(III)-[cytochrome c] + 2 H2O + 4 H(+)(out). Functionally, component of the cytochrome c oxidase, the last enzyme in the mitochondrial electron transport chain which drives oxidative phosphorylation. The respiratory chain contains 3 multisubunit complexes succinate dehydrogenase (complex II, CII), ubiquinol-cytochrome c oxidoreductase (cytochrome b-c1 complex, complex III, CIII) and cytochrome c oxidase (complex IV, CIV), that cooperate to transfer electrons derived from NADH and succinate to molecular oxygen, creating an electrochemical gradient over the inner membrane that drives transmembrane transport and the ATP synthase. Cytochrome c oxidase is the component of the respiratory chain that catalyzes the reduction of oxygen to water. Electrons originating from reduced cytochrome c in the intermembrane space (IMS) are transferred via the dinuclear copper A center (CU(A)) of subunit 2 and heme A of subunit 1 to the active site in subunit 1, a binuclear center (BNC) formed by heme A3 and copper B (CU(B)). The BNC reduces molecular oxygen to 2 water molecules using 4 electrons from cytochrome c in the IMS and 4 protons from the mitochondrial matrix. The polypeptide is Cytochrome c oxidase subunit 3 (MT-CO3) (Lycodon semicarinatus (Ryukyu odd-tooth snake)).